The sequence spans 158 residues: uncharacterized protein (158 aa).

The first 16 residues, 1-16 (MFRPILILTILSCVLA), serve as a signal peptide directing secretion. N-linked (GlcNAc...) asparagine glycosylation occurs at Asn-122.

This is an uncharacterized protein from Caenorhabditis elegans.